The following is a 274-amino-acid chain: uncharacterized protein (274 aa).

A signal peptide spans 1 to 30 (MTIDTPAREDQTLAATHRAMWALGDYALMA).

This sequence to M.tuberculosis Rv1403c.

This is an uncharacterized protein from Mycobacterium bovis (strain ATCC BAA-935 / AF2122/97).